The primary structure comprises 78 residues: Small ribosomal subunit protein bS18c (78 aa).

The protein belongs to the bacterial ribosomal protein bS18 family. In terms of assembly, part of the 30S ribosomal subunit.

Its subcellular location is the plastid. It localises to the chloroplast. This Oltmannsiellopsis viridis (Marine flagellate) protein is Small ribosomal subunit protein bS18c.